Here is a 430-residue protein sequence, read N- to C-terminus: Adenylosuccinate synthetase (430 aa).

Residues 12–18 and 40–42 contribute to the GTP site; these read GDEGKGK and GHT. Residue Asp13 is the Proton acceptor of the active site. The Mg(2+) site is built by Asp13 and Gly40. Residues 13-16, 38-41, Thr130, Arg144, Gln224, Thr239, and Arg303 contribute to the IMP site; these read DEGK and NAGH. His41 (proton donor) is an active-site residue. 299-305 is a binding site for substrate; that stretch reads VNTGRKR. GTP contacts are provided by residues Arg305, 331–333, and 413–415; these read KLD and STS.

It belongs to the adenylosuccinate synthetase family. Homodimer. Mg(2+) serves as cofactor.

The protein resides in the cytoplasm. The enzyme catalyses IMP + L-aspartate + GTP = N(6)-(1,2-dicarboxyethyl)-AMP + GDP + phosphate + 2 H(+). It participates in purine metabolism; AMP biosynthesis via de novo pathway; AMP from IMP: step 1/2. In terms of biological role, plays an important role in the de novo pathway of purine nucleotide biosynthesis. Catalyzes the first committed step in the biosynthesis of AMP from IMP. The chain is Adenylosuccinate synthetase from Nitrobacter hamburgensis (strain DSM 10229 / NCIMB 13809 / X14).